Reading from the N-terminus, the 202-residue chain is Casparian strip membrane protein 1 (202 aa).

The span at 1–13 shows a compositional bias: polar residues; that stretch reads MEKSESSTIQIAE. Residues 1–30 form a disordered region; the sequence is MEKSESSTIQIAESSKDRKGKAPLLPPPVH. Topologically, residues 1 to 42 are cytoplasmic; it reads MEKSESSTIQIAESSKDRKGKAPLLPPPVHHERAAGYKRGVA. Residues 43-63 traverse the membrane as a helical segment; the sequence is IFDLILRISAATAALAATIVM. Residues 64–90 are Extracellular-facing; that stretch reads GTTEQTLPFFTQFFQFRASYDDLPTFT. Residues 91–111 traverse the membrane as a helical segment; it reads FFVIAMAIVTGYLILSVPFSI. The Cytoplasmic portion of the chain corresponds to 112-130; sequence VCIARPVVAAPRILLILCD. Residues 131-151 form a helical membrane-spanning segment; that stretch reads TLTVTLATSAAGASAAIVYLA. At 152 to 177 the chain is on the extracellular side; it reads HNGXSDANWLAICQQFNDFCQRVSGA. Residues 178–198 traverse the membrane as a helical segment; the sequence is VVAAFVSAVLLIFLVVLSAIV. The Cytoplasmic segment spans residues 199–202; it reads LKKH.

It belongs to the Casparian strip membrane proteins (CASP) family. As to quaternary structure, homodimer and heterodimers.

It is found in the cell membrane. Functionally, regulates membrane-cell wall junctions and localized cell wall deposition. Required for establishment of the Casparian strip membrane domain (CSD) and the subsequent formation of Casparian strips, a cell wall modification of the root endodermis that determines an apoplastic barrier between the intraorganismal apoplasm and the extraorganismal apoplasm and prevents lateral diffusion. The protein is Casparian strip membrane protein 1 of Triphysaria pusilla (Dwarf owl's-clover).